A 168-amino-acid chain; its full sequence is Endoribonuclease YbeY (168 aa).

3 residues coordinate Zn(2+): His-132, His-136, and His-142.

The protein belongs to the endoribonuclease YbeY family. The cofactor is Zn(2+).

The protein resides in the cytoplasm. Single strand-specific metallo-endoribonuclease involved in late-stage 70S ribosome quality control and in maturation of the 3' terminus of the 16S rRNA. The chain is Endoribonuclease YbeY from Clostridium perfringens (strain ATCC 13124 / DSM 756 / JCM 1290 / NCIMB 6125 / NCTC 8237 / Type A).